Reading from the N-terminus, the 218-residue chain is Zinc finger CCHC-type and RNA-binding motif-containing protein 1 (218 aa).

The 79-residue stretch at 10 to 88 folds into the RRM domain; sequence STVYVSNLPF…RAIKASIAKD (79 aa). The CCHC-type zinc finger occupies 105 to 122; that stretch reads SRCYECGDTGHLSYACPK. The disordered stretch occupies residues 119–218; that stretch reads ACPKNMLGER…YFSDEDELSD (100 aa). A coiled-coil region spans residues 132–188; sequence QKKEKKKRKRLVEEEEEEVVEEEESEDEGEDPALDSLSQAIAFQQARIDEEKNKYRH. The segment covering 144 to 164 has biased composition (acidic residues); the sequence is EEEEEEVVEEEESEDEGEDPA. A compositionally biased stretch (basic and acidic residues) spans 178–201; sequence RIDEEKNKYRHDPAEASTSEDSRR.

Component of the U11/U12 snRNPs that are part of the U12-type spliceosome.

It localises to the nucleus. This is Zinc finger CCHC-type and RNA-binding motif-containing protein 1 (zcrb1) from Xenopus laevis (African clawed frog).